An 80-amino-acid polypeptide reads, in one-letter code: Putative ankyrin repeat protein RC0877 (80 aa).

Residues 6 to 46 form an ANK repeat; sequence SGGIPLHAVAKNVRCTSKDIKDYEIYKLLVSYGADINARVE.

This is Putative ankyrin repeat protein RC0877 from Rickettsia conorii (strain ATCC VR-613 / Malish 7).